The sequence spans 163 residues: Transcription antitermination protein NusB (163 aa).

Residues 1 to 21 (MTTFLSDSEHPQDVKAPPKSA) are disordered.

The protein belongs to the NusB family.

In terms of biological role, involved in transcription antitermination. Required for transcription of ribosomal RNA (rRNA) genes. Binds specifically to the boxA antiterminator sequence of the ribosomal RNA (rrn) operons. The protein is Transcription antitermination protein NusB of Dechloromonas aromatica (strain RCB).